A 22-amino-acid polypeptide reads, in one-letter code: leu leader peptide (22 aa).

Residues 1–22 (MLHHMTSRANLLLLRRGGSQRS) are disordered. Over residues 11–22 (LLLLRRGGSQRS) the composition is skewed to low complexity.

Involved in control of the biosynthesis of leucine. This chain is leu leader peptide (leuL), found in Corynebacterium glutamicum (strain ATCC 13032 / DSM 20300 / JCM 1318 / BCRC 11384 / CCUG 27702 / LMG 3730 / NBRC 12168 / NCIMB 10025 / NRRL B-2784 / 534).